We begin with the raw amino-acid sequence, 461 residues long: Cyclic AMP-responsive element-binding protein 3-like protein 3 (461 aa).

Topologically, residues 1 to 322 (MNTDLAAGKM…STSKSAQTGT (322 aa)) are cytoplasmic. A disordered region spans residues 51 to 120 (DQQVLPNPDS…AGCHPAQPGK (70 aa)). A compositionally biased stretch (low complexity) spans 63-85 (FLSSILGSGDSLPSSPLWSPEGS). Position 173 is a phosphoserine (Ser-173). The bZIP domain occupies 243–306 (VLKKIRRKIR…LSLLEQLKKL (64 aa)). The interval 245 to 274 (KKIRRKIRNKQSAQESRKKKKEYIDGLETR) is basic motif. A leucine-zipper region spans residues 285–306 (LQRKVLHLEKQNLSLLEQLKKL). Lys-294 is covalently cross-linked (Glycyl lysine isopeptide (Lys-Gly) (interchain with G-Cter in ubiquitin)). Residues 323–343 (CVAVLLLSFALIILPSISPFG) traverse the membrane as a helical; Signal-anchor for type II membrane protein segment. The Lumenal segment spans residues 344–461 (PNKTESPGDF…AGLEAAGDEL (118 aa)). Residues 370-408 (RVAADAVPGSEAPGPRPEADTTREESPGSPGADWGFQDT) are disordered. A glycan (O-linked (GalNAc...) serine) is linked at Ser-379. The span at 386–395 (PEADTTREES) shows a compositional bias: basic and acidic residues. N-linked (GlcNAc...) asparagine glycosylation is found at Asn-410, Asn-413, Asn-420, and Asn-427. The segment at 442–461 (APGPSTGSGRAGLEAAGDEL) is disordered.

This sequence belongs to the bZIP family. ATF subfamily. As to quaternary structure, binds DNA as a dimer. May form homodimers. Interacts with ATF6. Interacts with SYNV1/HRD1; this interaction leads to CREB3L3 ubiquitination and proteasomal degradation. Controlled by regulated intramembrane proteolysis (RIP). Following ER stress a fragment containing the cytoplasmic transcription factor domain is released by proteolysis. The cleavage seems to be performed sequentially by site-1 and site-2 proteases (PS1 and PS2). Post-translationally, N- and O-glycosylated. N-glycosylation is required for optimal proteolytic activation. O-glycosylated with core 1 or possibly core 8 glycans. In terms of processing, ubiquitinated at Lys-294 by SYNV1/HRD1 via 'Lys-27'-linked ubiquitin. In terms of tissue distribution, exclusively expressed in liver. Underexpressed in hepatocellular carcinoma tissues.

It is found in the endoplasmic reticulum membrane. Its subcellular location is the nucleus. Functionally, transcription factor that may act during endoplasmic reticulum stress by activating unfolded protein response target genes. Activated in response to cAMP stimulation. In vitro, binds to the cAMP response element (CRE) and box-B element. Activates transcription through box-B element. Activates transcription through CRE. May function synergistically with ATF6. In acute inflammatory response, may activate expression of acute phase response (APR) genes. May be involved in growth suppression. Regulates FGF21 transcription. Plays a crucial role in the regulation of triglyceride metabolism and is required for the maintenance of normal plasma triglyceride concentrations. In Homo sapiens (Human), this protein is Cyclic AMP-responsive element-binding protein 3-like protein 3 (CREB3L3).